The primary structure comprises 387 residues: [LysW]-aminoadipate semialdehyde/glutamate semialdehyde transaminase (387 aa).

Pyridoxal 5'-phosphate-binding positions include 96 to 97 (GT) and Phe123. Arg126 serves as a coordination point for substrate. 207–210 (DEIQ) is a binding site for pyridoxal 5'-phosphate. Lys236 bears the N6-(pyridoxal phosphate)lysine mark. Ser264 is a binding site for substrate. A pyridoxal 5'-phosphate-binding site is contributed by Thr265.

Belongs to the class-III pyridoxal-phosphate-dependent aminotransferase family. LysJ subfamily. Homodimer. It depends on pyridoxal 5'-phosphate as a cofactor.

Its subcellular location is the cytoplasm. It catalyses the reaction [amino-group carrier protein]-C-terminal-gamma-(L-lysyl)-L-glutamate + 2-oxoglutarate = [amino-group carrier protein]-C-terminal-N-(1-carboxy-5-oxopentan-1-yl)-L-glutamine + L-glutamate. It carries out the reaction [amino-group carrier protein]-C-terminal-gamma-(L-ornithyl)-L-glutamate + 2-oxoglutarate = [amino-group carrier protein]-C-terminal-gamma-(L-glutamyl-5-semialdehyde)-L-glutamate + L-glutamate. It functions in the pathway amino-acid biosynthesis; L-lysine biosynthesis via AAA pathway; L-lysine from L-alpha-aminoadipate (Thermus route): step 4/5. Its pathway is amino-acid biosynthesis; L-arginine biosynthesis. Functionally, involved in both the arginine and lysine biosynthetic pathways. This Sulfolobus acidocaldarius (strain ATCC 33909 / DSM 639 / JCM 8929 / NBRC 15157 / NCIMB 11770) protein is [LysW]-aminoadipate semialdehyde/glutamate semialdehyde transaminase.